A 365-amino-acid polypeptide reads, in one-letter code: 1-deoxy-D-xylulose 5-phosphate reductoisomerase (365 aa).

Positions 7, 8, 9, 10, 31, 32, 33, and 114 each coordinate NADPH. K115 serves as a coordination point for 1-deoxy-D-xylulose 5-phosphate. Residue E116 coordinates NADPH. D134 contributes to the Mn(2+) binding site. Residues S135, E136, S158, and H181 each coordinate 1-deoxy-D-xylulose 5-phosphate. E136 contacts Mn(2+). G187 is a binding site for NADPH. 1-deoxy-D-xylulose 5-phosphate is bound by residues S194, N199, K200, and E203. E203 is a binding site for Mn(2+).

This sequence belongs to the DXR family. Mg(2+) serves as cofactor. Mn(2+) is required as a cofactor.

The enzyme catalyses 2-C-methyl-D-erythritol 4-phosphate + NADP(+) = 1-deoxy-D-xylulose 5-phosphate + NADPH + H(+). Its pathway is isoprenoid biosynthesis; isopentenyl diphosphate biosynthesis via DXP pathway; isopentenyl diphosphate from 1-deoxy-D-xylulose 5-phosphate: step 1/6. In terms of biological role, catalyzes the NADPH-dependent rearrangement and reduction of 1-deoxy-D-xylulose-5-phosphate (DXP) to 2-C-methyl-D-erythritol 4-phosphate (MEP). This is 1-deoxy-D-xylulose 5-phosphate reductoisomerase from Campylobacter curvus (strain 525.92).